The chain runs to 363 residues: Chorismate synthase (363 aa).

NADP(+)-binding residues include Arg-48 and Arg-54. Residues 125–127 (RSS), 237–238 (NA), Gly-277, 292–296 (KPTSS), and Arg-318 contribute to the FMN site.

Belongs to the chorismate synthase family. In terms of assembly, homotetramer. It depends on FMNH2 as a cofactor.

The catalysed reaction is 5-O-(1-carboxyvinyl)-3-phosphoshikimate = chorismate + phosphate. Its pathway is metabolic intermediate biosynthesis; chorismate biosynthesis; chorismate from D-erythrose 4-phosphate and phosphoenolpyruvate: step 7/7. Functionally, catalyzes the anti-1,4-elimination of the C-3 phosphate and the C-6 proR hydrogen from 5-enolpyruvylshikimate-3-phosphate (EPSP) to yield chorismate, which is the branch point compound that serves as the starting substrate for the three terminal pathways of aromatic amino acid biosynthesis. This reaction introduces a second double bond into the aromatic ring system. The protein is Chorismate synthase of Pseudomonas fluorescens (strain Pf0-1).